Here is a 377-residue protein sequence, read N- to C-terminus: tRNA N6-adenosine threonylcarbamoyltransferase (377 aa).

2 residues coordinate Fe cation: His-129 and His-133. Substrate contacts are provided by residues 151 to 155 (LVSGG), Asp-184, Gly-197, and Asn-298. Fe cation is bound at residue Asp-326. Positions 358-377 (DGAAAKSDPAIGSGRKGPKA) are disordered.

The protein belongs to the KAE1 / TsaD family. The cofactor is Fe(2+).

It is found in the cytoplasm. The catalysed reaction is L-threonylcarbamoyladenylate + adenosine(37) in tRNA = N(6)-L-threonylcarbamoyladenosine(37) in tRNA + AMP + H(+). Functionally, required for the formation of a threonylcarbamoyl group on adenosine at position 37 (t(6)A37) in tRNAs that read codons beginning with adenine. Is involved in the transfer of the threonylcarbamoyl moiety of threonylcarbamoyl-AMP (TC-AMP) to the N6 group of A37, together with TsaE and TsaB. TsaD likely plays a direct catalytic role in this reaction. In Maricaulis maris (strain MCS10) (Caulobacter maris), this protein is tRNA N6-adenosine threonylcarbamoyltransferase.